A 598-amino-acid polypeptide reads, in one-letter code: Elongation factor 4 (598 aa).

Residues 4–185 enclose the tr-type G domain; the sequence is KNIRNFSIIA…TIIAKIPPPK (182 aa). GTP-binding positions include 16–21 and 132–135; these read DHGKST and NKID.

Belongs to the TRAFAC class translation factor GTPase superfamily. Classic translation factor GTPase family. LepA subfamily.

The protein localises to the cell membrane. The catalysed reaction is GTP + H2O = GDP + phosphate + H(+). In terms of biological role, required for accurate and efficient protein synthesis under certain stress conditions. May act as a fidelity factor of the translation reaction, by catalyzing a one-codon backward translocation of tRNAs on improperly translocated ribosomes. Back-translocation proceeds from a post-translocation (POST) complex to a pre-translocation (PRE) complex, thus giving elongation factor G a second chance to translocate the tRNAs correctly. Binds to ribosomes in a GTP-dependent manner. The protein is Elongation factor 4 of Mycoplasma genitalium (strain ATCC 33530 / DSM 19775 / NCTC 10195 / G37) (Mycoplasmoides genitalium).